The following is a 101-amino-acid chain: Replication restart protein PriB (101 aa).

Positions 1–101 (MTTNSLVLSG…IHAENVELKT (101 aa)) constitute an SSB domain.

Belongs to the PriB family. In terms of assembly, homodimer. Interacts with PriA and DnaT. Component of the replication restart primosome. Primosome assembly occurs via a 'hand-off' mechanism. PriA binds to replication forks, subsequently PriB then DnaT bind; DnaT then displaces ssDNA to generate the helicase loading substrate.

Its function is as follows. Involved in the restart of stalled replication forks, which reloads the replicative helicase on sites other than the origin of replication; the PriA-PriB pathway is the major replication restart pathway. During primosome assembly it facilitates complex formation between PriA and DnaT on DNA; stabilizes PriA on DNA. Stimulates the DNA unwinding activity of PriA helicase. The chain is Replication restart protein PriB from Shewanella putrefaciens (strain CN-32 / ATCC BAA-453).